The chain runs to 334 residues: MATIKDVARLAGVSTTTVSHVINKTRFVAEATQEKVNKAVDELNYAPSAVARSLKCNTTRTIGMLVTQSTNLFFSEVIDGVESYCYRQGYTLILCNTGGIYEKQRDYIRMLAEKRVDGILVMCSDLTEELREMLDRHADIPKVIMDWGPESSQADKIIDNSEEGGYLATKYLIERGHSKIACLSGHLDKAACVERISGYKRALNEAKITADENMIIEGNFECDTAVIAADQIIEMEERPTAVFCFNDTMALGLMSRLQEKGIRIPEDISVIGYDNIELAEYFSPPLTTVHQPKRRVGKNAFEILLERIKDKDHEKRVFEMHPEIVERSTVKTLN.

One can recognise an HTH lacI-type domain in the interval 2–56 (ATIKDVARLAGVSTTTVSHVINKTRFVAEATQEKVNKAVDELNYAPSAVARSLKC). The H-T-H motif DNA-binding region spans 4–23 (IKDVARLAGVSTTTVSHVIN). Residues 48–56 (SAVARSLKC) mediate DNA binding. Positions 73, 189, 220, and 274 each coordinate hypoxanthine.

Homodimer.

It participates in purine metabolism; purine nucleotide biosynthesis [regulation]. Is the main repressor of the genes involved in the de novo synthesis of purine nucleotides, regulating purB, purC, purEK, purF, purHD, purL, purMN and guaBA expression. PurR is allosterically activated to bind its cognate DNA by binding the purine corepressors, hypoxanthine or guanine, thereby effecting transcription repression. The protein is HTH-type transcriptional repressor PurR of Vibrio atlanticus (strain LGP32) (Vibrio splendidus (strain Mel32)).